A 536-amino-acid polypeptide reads, in one-letter code: Phosphoenolpyruvate carboxykinase (ATP) (536 aa).

Positions 61, 195, and 201 each coordinate substrate. ATP-binding positions include lysine 201, histidine 220, and 236–244 (GLSGTGKTT). 2 residues coordinate Mn(2+): lysine 201 and histidine 220. Residue aspartate 257 participates in Mn(2+) binding. Positions 285, 322, and 447 each coordinate ATP. A substrate-binding site is contributed by arginine 322.

Belongs to the phosphoenolpyruvate carboxykinase (ATP) family. The cofactor is Mn(2+).

Its subcellular location is the cytoplasm. It carries out the reaction oxaloacetate + ATP = phosphoenolpyruvate + ADP + CO2. It participates in carbohydrate biosynthesis; gluconeogenesis. Functionally, involved in the gluconeogenesis. Catalyzes the conversion of oxaloacetate (OAA) to phosphoenolpyruvate (PEP) through direct phosphoryl transfer between the nucleoside triphosphate and OAA. The sequence is that of Phosphoenolpyruvate carboxykinase (ATP) from Brucella melitensis biotype 1 (strain ATCC 23456 / CCUG 17765 / NCTC 10094 / 16M).